Here is a 500-residue protein sequence, read N- to C-terminus: NAD(P)H-quinone oxidoreductase chain 4, chloroplastic (500 aa).

A run of 14 helical transmembrane segments spans residues 4-24 (FPWL…IFFL), 35-55 (YTMG…CYHF), 87-107 (IGPI…AWPV), 113-130 (LFHF…GLFS), 134-154 (LLLF…LLSM), 167-187 (FILY…GMGL), 208-228 (GLEI…LPII), 242-262 (HYST…YGLI), 274-294 (SIFS…AALT), 305-325 (IAYS…SLTN), 330-350 (GAIL…FLGG), 386-406 (LALP…GIIT), 416-436 (IIIT…LLSM), and 463-483 (FVSI…DLVI).

Belongs to the complex I subunit 4 family.

The protein resides in the plastid. It is found in the chloroplast thylakoid membrane. The enzyme catalyses a plastoquinone + NADH + (n+1) H(+)(in) = a plastoquinol + NAD(+) + n H(+)(out). The catalysed reaction is a plastoquinone + NADPH + (n+1) H(+)(in) = a plastoquinol + NADP(+) + n H(+)(out). This is NAD(P)H-quinone oxidoreductase chain 4, chloroplastic from Lemna minor (Common duckweed).